Here is a 315-residue protein sequence, read N- to C-terminus: Putative protein phosphatase 2C 24 (315 aa).

A PPM-type phosphatase domain is found at 71–314 (ALRMEAASCF…DDITVVVAYI (244 aa)). Mn(2+) contacts are provided by Asp102, Gly103, Asp238, and Asp305.

The protein belongs to the PP2C family. It depends on Mg(2+) as a cofactor. The cofactor is Mn(2+).

The catalysed reaction is O-phospho-L-seryl-[protein] + H2O = L-seryl-[protein] + phosphate. The enzyme catalyses O-phospho-L-threonyl-[protein] + H2O = L-threonyl-[protein] + phosphate. This is Putative protein phosphatase 2C 24 from Oryza sativa subsp. japonica (Rice).